A 318-amino-acid polypeptide reads, in one-letter code: uncharacterized protein (318 aa).

This is an uncharacterized protein from Autographa californica nuclear polyhedrosis virus (AcMNPV).